The sequence spans 425 residues: Glutamate-1-semialdehyde 2,1-aminomutase (425 aa).

Lys-265 bears the N6-(pyridoxal phosphate)lysine mark.

The protein belongs to the class-III pyridoxal-phosphate-dependent aminotransferase family. HemL subfamily. Homodimer. The cofactor is pyridoxal 5'-phosphate.

It localises to the cytoplasm. It carries out the reaction (S)-4-amino-5-oxopentanoate = 5-aminolevulinate. It functions in the pathway porphyrin-containing compound metabolism; protoporphyrin-IX biosynthesis; 5-aminolevulinate from L-glutamyl-tRNA(Glu): step 2/2. This Laribacter hongkongensis (strain HLHK9) protein is Glutamate-1-semialdehyde 2,1-aminomutase.